The primary structure comprises 434 residues: 3-phosphoshikimate 1-carboxyvinyltransferase (434 aa).

Positions 22, 23, and 27 each coordinate 3-phosphoshikimate. Position 22 (K22) interacts with phosphoenolpyruvate. G93 and R121 together coordinate phosphoenolpyruvate. The 3-phosphoshikimate site is built by S168, S169, Q170, S199, D320, and K347. Phosphoenolpyruvate is bound at residue Q170. The active-site Proton acceptor is D320. 3 residues coordinate phosphoenolpyruvate: R351, R394, and K419.

It belongs to the EPSP synthase family. Monomer.

Its subcellular location is the cytoplasm. The catalysed reaction is 3-phosphoshikimate + phosphoenolpyruvate = 5-O-(1-carboxyvinyl)-3-phosphoshikimate + phosphate. The protein operates within metabolic intermediate biosynthesis; chorismate biosynthesis; chorismate from D-erythrose 4-phosphate and phosphoenolpyruvate: step 6/7. Its function is as follows. Catalyzes the transfer of the enolpyruvyl moiety of phosphoenolpyruvate (PEP) to the 5-hydroxyl of shikimate-3-phosphate (S3P) to produce enolpyruvyl shikimate-3-phosphate and inorganic phosphate. The polypeptide is 3-phosphoshikimate 1-carboxyvinyltransferase (Paraburkholderia phytofirmans (strain DSM 17436 / LMG 22146 / PsJN) (Burkholderia phytofirmans)).